The sequence spans 213 residues: Guanylate kinase (213 aa).

The Guanylate kinase-like domain occupies Gly12–His190. Residue Ala19–Ser26 coordinates ATP.

This sequence belongs to the guanylate kinase family.

The protein resides in the cytoplasm. The enzyme catalyses GMP + ATP = GDP + ADP. Its function is as follows. Essential for recycling GMP and indirectly, cGMP. In Granulibacter bethesdensis (strain ATCC BAA-1260 / CGDNIH1), this protein is Guanylate kinase.